The sequence spans 205 residues: GTP cyclohydrolase 1 (205 aa).

Positions 94, 97, and 165 each coordinate Zn(2+).

Belongs to the GTP cyclohydrolase I family. As to quaternary structure, toroid-shaped homodecamer, composed of two pentamers of five dimers.

The catalysed reaction is GTP + H2O = 7,8-dihydroneopterin 3'-triphosphate + formate + H(+). The protein operates within cofactor biosynthesis; 7,8-dihydroneopterin triphosphate biosynthesis; 7,8-dihydroneopterin triphosphate from GTP: step 1/1. This is GTP cyclohydrolase 1 from Sinorhizobium medicae (strain WSM419) (Ensifer medicae).